Reading from the N-terminus, the 398-residue chain is Putative isocitrate lyase subunit B (398 aa).

This sequence belongs to the isocitrate lyase/PEP mutase superfamily. Isocitrate lyase family. Mg(2+) is required as a cofactor.

The enzyme catalyses D-threo-isocitrate = glyoxylate + succinate. Its function is as follows. Together with AceAa, they could catalyze the formation of succinate and glyoxylate from isocitrate. The sequence is that of Putative isocitrate lyase subunit B (aceAb) from Mycobacterium tuberculosis (strain ATCC 25618 / H37Rv).